Here is a 314-residue protein sequence, read N- to C-terminus: Dihydropteroate synthase (314 aa).

The 285-residue stretch at 10 to 294 folds into the Pterin-binding domain; the sequence is TVICGIINVT…DVASHRMAVE (285 aa). A Mg(2+)-binding site is contributed by Asn-17. (7,8-dihydropterin-6-yl)methyl diphosphate is bound by residues Thr-57, Asp-91, Asn-110, Asp-201, Lys-237, and 282–284; that span reads RVH.

The protein belongs to the DHPS family. Homodimer or homotrimer. The cofactor is Mg(2+).

The enzyme catalyses (7,8-dihydropterin-6-yl)methyl diphosphate + 4-aminobenzoate = 7,8-dihydropteroate + diphosphate. The protein operates within cofactor biosynthesis; tetrahydrofolate biosynthesis; 7,8-dihydrofolate from 2-amino-4-hydroxy-6-hydroxymethyl-7,8-dihydropteridine diphosphate and 4-aminobenzoate: step 1/2. Its function is as follows. Catalyzes the condensation of para-aminobenzoate (pABA) with 6-hydroxymethyl-7,8-dihydropterin diphosphate (DHPt-PP) to form 7,8-dihydropteroate (H2Pte), the immediate precursor of folate derivatives. The sequence is that of Dihydropteroate synthase (sulA) from Streptococcus pneumoniae serotype 4 (strain ATCC BAA-334 / TIGR4).